We begin with the raw amino-acid sequence, 329 residues long: Delta-aminolevulinic acid dehydratase (329 aa).

4 residues coordinate Zn(2+): Cys-122, Cys-124, His-131, and Cys-132. The active-site Schiff-base intermediate with substrate is the Lys-199. Lys-199 carries the N6-succinyllysine modification. 5-aminolevulinate is bound at residue Arg-209. Position 215 is a phosphoserine (Ser-215). Arg-221 serves as a coordination point for 5-aminolevulinate. Cys-223 provides a ligand contact to Zn(2+). The active-site Schiff-base intermediate with substrate is the Lys-252. Position 252 is an N6-succinyllysine (Lys-252). Ser-279 and Tyr-318 together coordinate 5-aminolevulinate.

The protein belongs to the ALAD family. Homooctamer; active form. Homohexamer; low activity form. Zn(2+) serves as cofactor.

The protein localises to the cytoplasm. The protein resides in the cytosol. It catalyses the reaction 2 5-aminolevulinate = porphobilinogen + 2 H2O + H(+). The protein operates within porphyrin-containing compound metabolism; protoporphyrin-IX biosynthesis; coproporphyrinogen-III from 5-aminolevulinate: step 1/4. Its activity is regulated as follows. Can alternate between a fully active homooctamer and a low-activity homohexamer. A bound magnesium ion may promote the assembly of the fully active homooctamer. The magnesium-binding site is absent in the low-activity homohexamer. Inhibited by compounds that favor the hexameric state. Inhibited by divalent lead ions. The lead ions partially displace the zinc cofactor. Its function is as follows. Catalyzes an early step in the biosynthesis of tetrapyrroles. Binds two molecules of 5-aminolevulinate per subunit, each at a distinct site, and catalyzes their condensation to form porphobilinogen. This is Delta-aminolevulinic acid dehydratase (ALAD) from Bos taurus (Bovine).